The primary structure comprises 584 residues: Arginine--tRNA ligase (584 aa).

Positions 126–136 (PNIAKEMHVGH) match the 'HIGH' region motif.

It belongs to the class-I aminoacyl-tRNA synthetase family. In terms of assembly, monomer.

It is found in the cytoplasm. It carries out the reaction tRNA(Arg) + L-arginine + ATP = L-arginyl-tRNA(Arg) + AMP + diphosphate. This is Arginine--tRNA ligase from Synechococcus elongatus (strain ATCC 33912 / PCC 7942 / FACHB-805) (Anacystis nidulans R2).